Reading from the N-terminus, the 1200-residue chain is Nuclear envelope pore membrane protein POM 121 (1200 aa).

The tract at residues 1-29 (MSPAAAAADGGERRRPPLGGREGRSRARG) is disordered. Residues 1-56 (MSPAAAAADGGERRRPPLGGREGRSRARGYGGPAGAAALGLALLGLALYLVPAAAA) are cisternal side. Positions 10–25 (GGERRRPPLGGREGRS) are enriched in basic and acidic residues. Residues 57–77 (LAWLAVGASAAWWGLSREPRG) form a helical membrane-spanning segment. The interval 76-1200 (RGPRALSSFV…QARRQHTRKK (1125 aa)) is pore side. Phosphoserine is present on S83. Disordered stretches follow at residues 91 to 167 (HPRP…SAVQ) and 177 to 196 (PTPL…GPLS). The span at 143–152 (LRQDPRERPG) shows a compositional bias: basic and acidic residues. Residue S244 is modified to Phosphoserine. Disordered stretches follow at residues 294–328 (KKKR…SAFE), 345–509 (SLKR…ITAE), 530–627 (PDDA…SDSK), 640–692 (SITP…LATP), 706–744 (PATP…PTFK), 1075–1151 (TSGT…SSLS), and 1173–1200 (PSFS…TRKK). The segment covering 298–312 (TVAEEDQLHLDGQEN) has biased composition (basic and acidic residues). Residues S319, S322, S325, S345, S355, S367, and S370 each carry the phosphoserine modification. A compositionally biased stretch (low complexity) spans 365-374 (TSSVSSLASA). The span at 379–397 (IPSSSRNAITSSYSSTRGI) shows a compositional bias: polar residues. Residues 404–419 (SGPTSSPFSSPASSRS) are compositionally biased toward low complexity. A phosphoserine mark is found at S408, S409, S412, S413, S416, and S417. Composition is skewed to basic and acidic residues over residues 424 to 433 (RPAKKTREEE) and 446 to 456 (TDKESPGEKVT). 4 stretches are compositionally biased toward low complexity: residues 463-477 (QQSS…GSSG), 546-574 (PPFT…PLLE), 581-598 (ESPA…TVAA), and 605-621 (PSLL…PLAS). Residues 640 to 657 (SITPLTDSKSSGVSQAEQ) are compositionally biased toward polar residues. Composition is skewed to low complexity over residues 658–669 (SVSTPASTASSP), 681–692 (SPPASSSSLATP), 715–742 (SPLP…TTPT), and 1075–1099 (TSGT…GSLS). The span at 1100-1121 (QNTLGAPSQGSPFAFSVGSTPE) shows a compositional bias: polar residues. Over residues 1190 to 1200 (LQARRQHTRKK) the composition is skewed to basic residues.

This sequence belongs to the POM121 family. Proteolytically cleaved by caspase-3 during apoptosis.

The protein localises to the nucleus. The protein resides in the nuclear pore complex. It localises to the nucleus membrane. It is found in the endoplasmic reticulum membrane. In terms of biological role, essential component of the nuclear pore complex (NPC). The repeat-containing domain may be involved in anchoring components of the pore complex to the pore membrane. When overexpressed in cells induces the formation of cytoplasmic annulate lamellae (AL). In Mus musculus (Mouse), this protein is Nuclear envelope pore membrane protein POM 121 (Pom121).